The primary structure comprises 342 residues: MSSSELLTSSYDFTLPEELIATQPANPRDSAKLLVYDRASDEISHVHFYDFEKFIPKNCALIFNDTKVIKARLFGQKESGGKIELLINRALDAHNIHVFTRGKVKIGTKISFGLELFAKIIELLEDGSRVVNFYKNDSILRFEEILPIIDKIGHIPLPPYIQREDNKDDEIEYQSVFAKEEGAVAAPTASLHFTKEQHERVCTKFTHAYITLHVGSGTFKPVECEKILEHTMHSEYYDISDRAKELLDSKVSILSVGTTSTRTIEFYARNKEHQRGEANLFLHPKNKPLRVDHILTNFHLPKSTLLMLVASFVGVDKAQELYKIAIEKEYRFYSYGDAMLIL.

It belongs to the QueA family. As to quaternary structure, monomer.

It localises to the cytoplasm. It carries out the reaction 7-aminomethyl-7-carbaguanosine(34) in tRNA + S-adenosyl-L-methionine = epoxyqueuosine(34) in tRNA + adenine + L-methionine + 2 H(+). Its pathway is tRNA modification; tRNA-queuosine biosynthesis. In terms of biological role, transfers and isomerizes the ribose moiety from AdoMet to the 7-aminomethyl group of 7-deazaguanine (preQ1-tRNA) to give epoxyqueuosine (oQ-tRNA). This is S-adenosylmethionine:tRNA ribosyltransferase-isomerase from Sulfurimonas denitrificans (strain ATCC 33889 / DSM 1251) (Thiomicrospira denitrificans (strain ATCC 33889 / DSM 1251)).